Consider the following 402-residue polypeptide: Serine/threonine-protein kinase US3 homolog (402 aa).

Disordered stretches follow at residues 1-21 (MSSTPEAETMECGISSSKVHD) and 46-88 (FPDS…SPET). Residues 102-386 (YNIVSSLPPG…AQDILMLPLF (285 aa)) enclose the Protein kinase domain. ATP is bound by residues 110–118 (PGSEGYIYV) and Lys-127. The active-site Proton acceptor is Asp-218.

Belongs to the protein kinase superfamily. Ser/Thr protein kinase family. Post-translationally, phosphorylated by UL13 homolog; this phosphorylation regulates subsequent phosphorylation of UL31 and UL34 homologs by US3. Autophosphorylated.

Its subcellular location is the host cytoplasm. It localises to the host nucleus. The catalysed reaction is L-seryl-[protein] + ATP = O-phospho-L-seryl-[protein] + ADP + H(+). It carries out the reaction L-threonyl-[protein] + ATP = O-phospho-L-threonyl-[protein] + ADP + H(+). In terms of biological role, multifunctional serine/threonine kinase that plays a role in several processes including egress of virus particles from the nucleus, modulation of the actin cytoskeleton and inhibition of apoptosis. Phosphorylates UL31 and UL34 homologs, two critical regulators of capsid budding from nucleus to endoplasmic reticulum, thereby facilitating virion egress. Modulates and redistributes host components of the nuclear envelope, including LMNA, emerin/EMD and the nuclear matrix protein MATR3. Phosphorylates envelope glycoprotein B (gB), probably to direct it to the cell surface. Promotes virus intracellular spread by restructuring host cell cytoskeleton. Blocks host apoptosis to extend cell survival and allow efficient viral replication. Promotes viral gene expression by phosphorylating host HDAC2 to reduce viral genome silencing. The chain is Serine/threonine-protein kinase US3 homolog (US1206) from Gallid herpesvirus 2 (strain GA) (GaHV-2).